We begin with the raw amino-acid sequence, 275 residues long: Voltage-dependent calcium channel gamma-5 subunit (275 aa).

The next 4 helical transmembrane spans lie at alanine 8–valine 28, phenylalanine 103–isoleucine 123, isoleucine 129–leucine 149, and phenylalanine 181–methionine 201.

This sequence belongs to the PMP-22/EMP/MP20 family. CACNG subfamily. In terms of assembly, the L-type calcium channel is composed of five subunits: alpha-1, alpha-2/delta, beta and gamma. Acts as an auxiliary subunit for AMPA-selective glutamate receptors (AMPARs). Found in a complex with GRIA1, GRIA2, GRIA3, GRIA4, CNIH2, CNIH3, CACNG2, CACNG3, CACNG4, CACNG7 and CACNG8. Interacts with GRIA1, GRIA2, GRIA3 and GRIA4.

Its subcellular location is the membrane. It localises to the postsynaptic density membrane. In terms of biological role, regulates the gating properties of AMPA-selective glutamate receptors (AMPARs). Modulates their gating properties by accelerating their rates of activation, deactivation and desensitization. Displays subunit-specific AMPA receptor regulation. Shows specificity for GRIA1, GRIA4 and the long isoform of GRIA2. According to PubMed:18817736, shows only specificity for GRIA2 and specifically to the form of GRIA2 for which a single amino acid in the pore region has been edited from a glutamine to an arginine residue. Thought to stabilize the calcium channel in an inactivated (closed) state. The chain is Voltage-dependent calcium channel gamma-5 subunit (Cacng5) from Rattus norvegicus (Rat).